An 81-amino-acid polypeptide reads, in one-letter code: Defensin-like protein 45 (81 aa).

Positions 1–27 (MAITKTSATFVLLIILAASLSNFNVLA) are cleaved as a signal peptide. Intrachain disulfides connect C40-C79, C44-C67, C53-C77, and C57-C78.

It belongs to the DEFL family.

Its subcellular location is the secreted. This is Defensin-like protein 45 from Arabidopsis thaliana (Mouse-ear cress).